A 445-amino-acid chain; its full sequence is FAS-associated factor 2-A (445 aa).

The UBA domain maps to 12-53 (EQTEKLLQFQDLTGIESMDQCRQTLQQHNWNIEAAVQDRLNE). Positions 275–353 (SERLEREERN…ERKSECLPAE (79 aa)) form a coiled coil. A disordered region spans residues 302-354 (RADQEKERKKKEKQEQKRREEEEAQRKQMLEERKKRNLEEEKERKSECLPAEP). Over residues 303 to 348 (ADQEKERKKKEKQEQKRREEEEAQRKQMLEERKKRNLEEEKERKSE) the composition is skewed to basic and acidic residues. The region spanning 357-439 (DHPDNVKIIF…GLSQSQLLFV (83 aa)) is the UBX domain.

The protein localises to the cytoplasm. It localises to the lipid droplet. The protein resides in the endoplasmic reticulum. Its function is as follows. Plays an important role in endoplasmic reticulum-associated degradation (ERAD) that mediates ubiquitin-dependent degradation of misfolded endoplasmic reticulum proteins. Involved in inhibition of lipid droplet degradation. Involved in stress granule disassembly. This Xenopus laevis (African clawed frog) protein is FAS-associated factor 2-A (faf2-a).